A 236-amino-acid chain; its full sequence is Leucyl/phenylalanyl-tRNA--protein transferase (236 aa).

It belongs to the L/F-transferase family.

It localises to the cytoplasm. It carries out the reaction N-terminal L-lysyl-[protein] + L-leucyl-tRNA(Leu) = N-terminal L-leucyl-L-lysyl-[protein] + tRNA(Leu) + H(+). The catalysed reaction is N-terminal L-arginyl-[protein] + L-leucyl-tRNA(Leu) = N-terminal L-leucyl-L-arginyl-[protein] + tRNA(Leu) + H(+). The enzyme catalyses L-phenylalanyl-tRNA(Phe) + an N-terminal L-alpha-aminoacyl-[protein] = an N-terminal L-phenylalanyl-L-alpha-aminoacyl-[protein] + tRNA(Phe). Its function is as follows. Functions in the N-end rule pathway of protein degradation where it conjugates Leu, Phe and, less efficiently, Met from aminoacyl-tRNAs to the N-termini of proteins containing an N-terminal arginine or lysine. The protein is Leucyl/phenylalanyl-tRNA--protein transferase of Shewanella sp. (strain ANA-3).